The primary structure comprises 419 residues: MHQIFPSTFFNFEFLRLLGTAPYLGAETGECLATAARIKDGDPESWYQAWYEQAQKALALADEAKAVGDGPGAAWGYIRASNYFRASEFLLHCTPEDPRILSSAVASADAFDKGWILLDGSVRKVEIPYEGGNTLPGRLYLPAPHHQVSGKIPVVVQTGGFDSTQEELYYYGAAGALPRGYAVFSFDGPGQGLSLRKDKLYLRPDWEHVTSKVLDHVIGELAPVHNLDVDRLAVFGASLGGYLSLRAAADPRVKAVVSCDGPLDLFDITRSRMPPWFINGWLSGWLSDGFFNWVIDRLASVNFQLAWEFGHSKWVYGVKTPADVMRTMQKFSLKDGYLSKIKCPTLITGAADSFYFTPQQNAHPIFDSLSALGPAEKHLWIGKDVEGGGLQAKIGALALMHHKMFAWLDETFGIRRDEL.

The active site involves S238.

It belongs to the AB hydrolase superfamily. FUS2 hydrolase family.

It functions in the pathway mycotoxin biosynthesis. Functionally, hydrolase; part of the gene cluster that mediates the biosynthesis of the mycotoxin lucilactaene and the lucilactaene-related compound NG-391 that act as cell cycle inhibitors with potent growth inhibitory activity against malarial parasites, moderate growth inhibitory activity against cancer cells, and no activity against bacteria and fungi. Within the pathway, LUC6 may catalyze the 2-pyrrolidone ring formation to form prelucilactaene C from prelucilactaene B, followed by C-15 hydroxylation by the same enzyme to give prelucilactaene D, epoxydation to yield prelucilactaene E, and finally cyclization to yield prelucilactaene F. The pathway begins with the hybrid PKS-NRPS synthetase LUC5 which is responsible for the condensation of one acetyl-coenzyme A (CoA) unit with six malonyl-CoA units and the amide linkage of the arising heptaketide and homoserine, subsequently releasing the first intermediate prelucilactaene B. Both the cytochrome P450 monooxygenase LUC2 and the hydrolase LUC6 function in parallel in modification of prelucilactaene B. LUC6 may catalyze the 2-pyrrolidone ring formation to form prelucilactaene C from prelucilactaene B, followed by C-15 hydroxylation by the same enzyme to give prelucilactaene D, which is then converted to prelucilactaene E by epoxidation, and finally to prelucilactaene F by cyclization. Prelucilactane D, prelucilactaene E, and prelucilactaene F can be converted to dihydrolucilactaene, NG391, and lucilactaene, respectively, via C-20 methyl group hydroxylation by the cytochrome P450 monooxygenase LUC2. However, LUC2, unlike FUS8 in fusarin C biosynthesis, is not enough for the full oxidation of the C-20 methyl group into carboxylic acid, which is a prerequisite for the final methylation step. The aldehyde dehydrogenase LUC3 is involved in the biosynthesis by further oxidation of the C-20 alcoholic analog prelucilactaene G into a carboxylic derivative. This unidentified carboxylic derivative may be converted to demethyllucilactaene. As the last step, the methyltransferase LUC1 methylates the hydroxyl group at C-21 of demethyllucilactaene to generate lucilactaene. This chain is Hydrolase LUC6, found in Fusarium sp.